Consider the following 1588-residue polypeptide: uncharacterized protein (1588 aa).

A compositionally biased stretch (basic and acidic residues) spans 486 to 495 (RKRLTSKTED). 2 disordered regions span residues 486–515 (RKRL…KRRP) and 1146–1176 (GGQD…RELN). Residues 498-507 (NQWTRDCQNS) show a composition bias toward polar residues. The span at 1150-1169 (NVSDQSENQSENQSLESETS) shows a compositional bias: low complexity.

It localises to the virion. This is an uncharacterized protein from Acanthamoeba polyphaga (Amoeba).